A 242-amino-acid chain; its full sequence is Sugar fermentation stimulation protein homolog (242 aa).

The protein belongs to the SfsA family.

In Methanosphaera stadtmanae (strain ATCC 43021 / DSM 3091 / JCM 11832 / MCB-3), this protein is Sugar fermentation stimulation protein homolog.